Consider the following 342-residue polypeptide: S-adenosylmethionine:tRNA ribosyltransferase-isomerase (342 aa).

It belongs to the QueA family. As to quaternary structure, monomer.

The protein resides in the cytoplasm. It catalyses the reaction 7-aminomethyl-7-carbaguanosine(34) in tRNA + S-adenosyl-L-methionine = epoxyqueuosine(34) in tRNA + adenine + L-methionine + 2 H(+). Its pathway is tRNA modification; tRNA-queuosine biosynthesis. Its function is as follows. Transfers and isomerizes the ribose moiety from AdoMet to the 7-aminomethyl group of 7-deazaguanine (preQ1-tRNA) to give epoxyqueuosine (oQ-tRNA). The sequence is that of S-adenosylmethionine:tRNA ribosyltransferase-isomerase from Streptococcus pneumoniae (strain ATCC BAA-255 / R6).